We begin with the raw amino-acid sequence, 51 residues long: Lysis protein for colicin A (51 aa).

The N-terminal stretch at 1–18 (MKKIIICVILLAIMLLAA) is a signal peptide. Cys19 carries N-palmitoyl cysteine lipidation. Cys19 carries S-diacylglycerol cysteine lipidation. Residues 27–51 (TGGGSVSPSSIVTGVSMGSDGVGNP) are disordered.

The protein localises to the cell outer membrane. Functionally, lysis proteins are required for both colicin release and partial cell lysis. In Citrobacter freundii, this protein is Lysis protein for colicin A (cal).